Reading from the N-terminus, the 430-residue chain is RNA-binding protein 34 (430 aa).

3 disordered regions span residues Met-1 to Arg-55, Val-72 to Glu-123, and Glu-134 to Ala-153. A phosphoserine mark is found at Ser-14, Ser-28, and Ser-99. Residues Asp-23 to Arg-34 are compositionally biased toward basic and acidic residues. Over residues Thr-113–Glu-123 the composition is skewed to basic and acidic residues. At Lys-151 the chain carries N6-acetyllysine. RRM domains lie at Arg-185 to Glu-280 and Arg-287 to Asn-364. Lys-242 participates in a covalent cross-link: Glycyl lysine isopeptide (Lys-Gly) (interchain with G-Cter in SUMO2). Ser-288 is subject to Phosphoserine. 2 disordered regions span residues Lys-365 to Glu-395 and Lys-411 to Lys-430.

This sequence belongs to the RRM RBM34 family.

It is found in the nucleus. It localises to the nucleolus. In Homo sapiens (Human), this protein is RNA-binding protein 34 (RBM34).